Reading from the N-terminus, the 276-residue chain is Putative glycosyltransferase 6 domain-containing protein 1 (276 aa).

The Cytoplasmic portion of the chain corresponds to 1–6 (MNSKRM). The chain crosses the membrane as a helical; Signal-anchor for type II membrane protein span at residues 7–23 (LLLVLFAFSLMLVERYF). The Lumenal segment spans residues 24–276 (RNHQVEELRL…NKYFYLNKPT (253 aa)). The N-linked (GlcNAc...) asparagine glycan is linked to Asn74. Substrate is bound by residues 82–87 (FATGRF), 173–175 (AAN), and 195–198 (HAWW). Glu263 serves as the catalytic Nucleophile.

Belongs to the glycosyltransferase 6 family. Requires Mn(2+) as cofactor. As to expression, expressed in both healthy and inflamed gingival tissue samples at similar levels, with higher expression in the gingival connective tissue compared to gingival epithelium. Strongest expression in testis, followed by leukocytes.

The protein resides in the membrane. The polypeptide is Putative glycosyltransferase 6 domain-containing protein 1 (GLT6D1) (Homo sapiens (Human)).